The primary structure comprises 399 residues: 1-deoxy-D-xylulose 5-phosphate reductoisomerase (399 aa).

Positions 11, 12, 13, 14, 37, 39, and 125 each coordinate NADPH. Lysine 126 contacts 1-deoxy-D-xylulose 5-phosphate. An NADPH-binding site is contributed by glutamate 127. Residue aspartate 151 coordinates Mn(2+). 1-deoxy-D-xylulose 5-phosphate contacts are provided by serine 152, glutamate 153, serine 177, and histidine 200. Mn(2+) is bound at residue glutamate 153. NADPH is bound at residue glycine 206. 1-deoxy-D-xylulose 5-phosphate is bound by residues serine 213, asparagine 218, lysine 219, and glutamate 222. Mn(2+) is bound at residue glutamate 222.

The protein belongs to the DXR family. Mg(2+) serves as cofactor. The cofactor is Mn(2+).

The catalysed reaction is 2-C-methyl-D-erythritol 4-phosphate + NADP(+) = 1-deoxy-D-xylulose 5-phosphate + NADPH + H(+). The protein operates within isoprenoid biosynthesis; isopentenyl diphosphate biosynthesis via DXP pathway; isopentenyl diphosphate from 1-deoxy-D-xylulose 5-phosphate: step 1/6. Functionally, catalyzes the NADPH-dependent rearrangement and reduction of 1-deoxy-D-xylulose-5-phosphate (DXP) to 2-C-methyl-D-erythritol 4-phosphate (MEP). In Nostoc sp. (strain PCC 7120 / SAG 25.82 / UTEX 2576), this protein is 1-deoxy-D-xylulose 5-phosphate reductoisomerase.